The chain runs to 589 residues: Sentrin-specific protease 2 (589 aa).

The short motif at 28–31 (KRRR) is the Nuclear localization signal element. S32 bears the Phosphoserine mark. Positions 46 to 51 (PAKRPR) match the Nuclear localization signal motif. The tract at residues 71-382 (GFPFQLTTKP…EKEISNALGH (312 aa)) is axin-binding. 2 disordered regions span residues 148–179 (SFGFTLNSEGYNRRPGGRRHSKGNPESSLMWK) and 191–210 (EESGKGLRRPHRTVEEGVQK). The short motif at 317 to 332 (LEPDLSEEVSARLRLG) is the Nuclear export signal element. S333 and S344 each carry phosphoserine. The tract at residues 395–559 (LRITRGDIQT…MFTCKYADYI (165 aa)) is protease. Active-site residues include H478 and D495. The active-site Nucleophile is the C548.

The protein belongs to the peptidase C48 family. As to quaternary structure, binds to SUMO2 and SUMO3. Interacts with the C-terminal domain of NUP153 via its N-terminus. Interacts with MTA1. Post-translationally, polyubiquitinated; which leads to proteasomal degradation.

Its subcellular location is the nucleus. It is found in the nuclear pore complex. The protein localises to the nucleus membrane. The protein resides in the cytoplasm. Functionally, protease that catalyzes two essential functions in the SUMO pathway. The first is the hydrolysis of an alpha-linked peptide bond at the C-terminal end of the small ubiquitin-like modifier (SUMO) propeptides, SUMO1, SUMO2 and SUMO3 leading to the mature form of the proteins. The second is the deconjugation of SUMO1, SUMO2 and SUMO3 from targeted proteins, by cleaving an epsilon-linked peptide bond between the C-terminal glycine of the mature SUMO and the lysine epsilon-amino group of the target protein. May down-regulate CTNNB1 levels and thereby modulate the Wnt pathway. Deconjugates SUMO2 from MTA1. Plays a dynamic role in adipogenesis by desumoylating and promoting the stabilization of CEBPB. Acts as a regulator of the cGAS-STING pathway by catalyzing desumoylation of CGAS and STING1 during the late phase of viral infection. In Pongo abelii (Sumatran orangutan), this protein is Sentrin-specific protease 2 (SENP2).